Reading from the N-terminus, the 105-residue chain is Pyrimidine/purine nucleoside phosphorylase (105 aa).

The protein belongs to the nucleoside phosphorylase PpnP family.

It carries out the reaction a purine D-ribonucleoside + phosphate = a purine nucleobase + alpha-D-ribose 1-phosphate. It catalyses the reaction adenosine + phosphate = alpha-D-ribose 1-phosphate + adenine. The catalysed reaction is cytidine + phosphate = cytosine + alpha-D-ribose 1-phosphate. The enzyme catalyses guanosine + phosphate = alpha-D-ribose 1-phosphate + guanine. It carries out the reaction inosine + phosphate = alpha-D-ribose 1-phosphate + hypoxanthine. It catalyses the reaction thymidine + phosphate = 2-deoxy-alpha-D-ribose 1-phosphate + thymine. The catalysed reaction is uridine + phosphate = alpha-D-ribose 1-phosphate + uracil. The enzyme catalyses xanthosine + phosphate = alpha-D-ribose 1-phosphate + xanthine. Catalyzes the phosphorolysis of diverse nucleosides, yielding D-ribose 1-phosphate and the respective free bases. Can use uridine, adenosine, guanosine, cytidine, thymidine, inosine and xanthosine as substrates. Also catalyzes the reverse reactions. The polypeptide is Pyrimidine/purine nucleoside phosphorylase (Cupriavidus pinatubonensis (strain JMP 134 / LMG 1197) (Cupriavidus necator (strain JMP 134))).